We begin with the raw amino-acid sequence, 137 residues long: DNA-binding protein H-NS (137 aa).

The stretch at 13-65 (TLRAQARECTLETLEEMLEKLEVVVNERREEESAAAAEVEERTRKLQQYREML) forms a coiled coil. The DNA-binding element occupies 112 to 117 (QGRTPA).

Belongs to the histone-like protein H-NS family. As to quaternary structure, homodimer that oligomerizes on DNA into higher-order complexes that form bridges between disparate regions of DNA compacting it. Interacts with Hha, YdgT and StpA.

The protein resides in the cytoplasm. It localises to the nucleoid. Functionally, a DNA-binding protein implicated in transcriptional repression and chromosome organization and compaction. Binds AT-rich DNA, repressing its transcription; about 754/4438 tested genes (15%) bind to H-NS, 70% of these are AT-rich and correspond to horizontally transferred geness (HTG), thus playing a central role in silencing foreign genes. This offers the selective advantage of silencing foreign DNA. Binds nucleation sites in AT-rich DNA and bridges them, forming higher-order nucleoprotein complexes and condensing the chromosome. A subset of genes are repressed by H-NS in association with Hha and/or YdgT. This Salmonella typhimurium (strain 14028s / SGSC 2262) protein is DNA-binding protein H-NS (hns).